Consider the following 126-residue polypeptide: Protein ApaG (126 aa).

Residues 2–126 form the ApaG domain; it reads SDPRYQIDVS…FRLAVPGALH (125 aa).

The protein is Protein ApaG of Ectopseudomonas mendocina (strain ymp) (Pseudomonas mendocina).